Consider the following 374-residue polypeptide: uncharacterized protein (374 aa).

A coiled-coil region spans residues 298 to 332 (TKEKLLKLHSEQKSLSEKINKLSGEKDIEQSMINN).

This is an uncharacterized protein from Acanthamoeba polyphaga (Amoeba).